The primary structure comprises 193 residues: Superoxide dismutase [Fe] (193 aa).

Residues histidine 27, histidine 74, aspartate 157, and histidine 161 each coordinate Fe cation.

This sequence belongs to the iron/manganese superoxide dismutase family. As to quaternary structure, monomer. Fe cation is required as a cofactor.

It carries out the reaction 2 superoxide + 2 H(+) = H2O2 + O2. In terms of biological role, destroys superoxide anion radicals which are normally produced within the cells and which are toxic to biological systems. Involved in the metabolism of 4-aminophenol. May have an indirect role in hydroxyquinol metabolism by scavenging and detoxifying reactive species that promote its auto-oxidation. This Burkholderia sp protein is Superoxide dismutase [Fe].